The sequence spans 475 residues: 3-isopropylmalate dehydratase large subunit 1 (475 aa).

Residues C353, C413, and C416 each coordinate [4Fe-4S] cluster.

It belongs to the aconitase/IPM isomerase family. LeuC type 1 subfamily. As to quaternary structure, heterodimer of LeuC and LeuD. [4Fe-4S] cluster is required as a cofactor.

The enzyme catalyses (2R,3S)-3-isopropylmalate = (2S)-2-isopropylmalate. It functions in the pathway amino-acid biosynthesis; L-leucine biosynthesis; L-leucine from 3-methyl-2-oxobutanoate: step 2/4. Catalyzes the isomerization between 2-isopropylmalate and 3-isopropylmalate, via the formation of 2-isopropylmaleate. The polypeptide is 3-isopropylmalate dehydratase large subunit 1 (Mannheimia succiniciproducens (strain KCTC 0769BP / MBEL55E)).